Here is a 655-residue protein sequence, read N- to C-terminus: Gastrulation defective protein 1 homolog (655 aa).

Disordered regions lie at residues 1–54 (MQRG…EQMI) and 83–165 (AKVF…DEQS). 3 stretches are compositionally biased toward basic and acidic residues: residues 23–36 (RSNETEAEDAKEST), 91–115 (QIEKARVTRPGMDKKREESKPKEDD), and 134–146 (TDKEKATKESSKD). The segment covering 147–164 (EDSDDDDYSSDEDSDDEQ) has biased composition (acidic residues). WD repeat units lie at residues 180-219 (HGSRAVLALAGDPSGARLVSGSIDYDMCFWDFAGMDSSMR), 227-268 (CENH…ECCK), 281-321 (GHVA…EQLQ), 330-369 (GLRTNAASCNFNRDATLIAAGCVDGSIQTWDTRKMFVNTT), 377-416 (QKGSEITSIVFSYMGQQLATRSNDETMKLWDLRQFKQPLH), 422-467 (FSRY…EVQR), and 470-510 (VSNA…RGAK). Disordered regions lie at residues 544–580 (KSRTSRKRMEKARMDPVKSQRPDLPITSGQGGRVASS) and 633–655 (AIFSEKLPADEPATKKPKTEADK). 2 stretches are compositionally biased toward basic and acidic residues: residues 554–564 (KARMDPVKSQR) and 639–655 (LPADEPATKKPKTEADK).

This sequence belongs to the WD repeat GAD-1 family.

This is Gastrulation defective protein 1 homolog from Drosophila melanogaster (Fruit fly).